The primary structure comprises 95 residues: Aspartyl/glutamyl-tRNA(Asn/Gln) amidotransferase subunit C (95 aa).

The protein belongs to the GatC family. Heterotrimer of A, B and C subunits.

The enzyme catalyses L-glutamyl-tRNA(Gln) + L-glutamine + ATP + H2O = L-glutaminyl-tRNA(Gln) + L-glutamate + ADP + phosphate + H(+). The catalysed reaction is L-aspartyl-tRNA(Asn) + L-glutamine + ATP + H2O = L-asparaginyl-tRNA(Asn) + L-glutamate + ADP + phosphate + 2 H(+). In terms of biological role, allows the formation of correctly charged Asn-tRNA(Asn) or Gln-tRNA(Gln) through the transamidation of misacylated Asp-tRNA(Asn) or Glu-tRNA(Gln) in organisms which lack either or both of asparaginyl-tRNA or glutaminyl-tRNA synthetases. The reaction takes place in the presence of glutamine and ATP through an activated phospho-Asp-tRNA(Asn) or phospho-Glu-tRNA(Gln). The sequence is that of Aspartyl/glutamyl-tRNA(Asn/Gln) amidotransferase subunit C from Chlorobium phaeobacteroides (strain BS1).